The chain runs to 507 residues: Proline--tRNA ligase (507 aa).

Belongs to the class-II aminoacyl-tRNA synthetase family. ProS type 3 subfamily. In terms of assembly, homodimer.

The protein localises to the cytoplasm. The catalysed reaction is tRNA(Pro) + L-proline + ATP = L-prolyl-tRNA(Pro) + AMP + diphosphate. Its function is as follows. Catalyzes the attachment of proline to tRNA(Pro) in a two-step reaction: proline is first activated by ATP to form Pro-AMP and then transferred to the acceptor end of tRNA(Pro). The protein is Proline--tRNA ligase of Protochlamydia amoebophila (strain UWE25).